A 306-amino-acid polypeptide reads, in one-letter code: Pantothenate kinase (306 aa).

Gly90 to Ser97 is a binding site for ATP.

The protein belongs to the prokaryotic pantothenate kinase family.

The protein resides in the cytoplasm. It catalyses the reaction (R)-pantothenate + ATP = (R)-4'-phosphopantothenate + ADP + H(+). It functions in the pathway cofactor biosynthesis; coenzyme A biosynthesis; CoA from (R)-pantothenate: step 1/5. The chain is Pantothenate kinase from Listeria monocytogenes serotype 4a (strain HCC23).